A 513-amino-acid chain; its full sequence is Putative ribose/galactose/methyl galactoside import ATP-binding protein 2 (513 aa).

ABC transporter domains follow at residues 24–260 (LSAE…VGRE) and 270–510 (VPIG…VMEL). 56–63 (GENGAGKS) provides a ligand contact to ATP.

Belongs to the ABC transporter superfamily. Carbohydrate importer 2 (CUT2) (TC 3.A.1.2) family.

The protein resides in the cell inner membrane. The catalysed reaction is D-ribose(out) + ATP + H2O = D-ribose(in) + ADP + phosphate + H(+). It carries out the reaction D-galactose(out) + ATP + H2O = D-galactose(in) + ADP + phosphate + H(+). Functionally, part of an ABC transporter complex involved in carbohydrate import. Could be involved in ribose, galactose and/or methyl galactoside import. Responsible for energy coupling to the transport system. The polypeptide is Putative ribose/galactose/methyl galactoside import ATP-binding protein 2 (Rhizobium etli (strain ATCC 51251 / DSM 11541 / JCM 21823 / NBRC 15573 / CFN 42)).